The chain runs to 323 residues: Methionine adenosyltransferase 2 subunit beta (323 aa).

NADP(+) contacts are provided by residues 26 to 29, 49 to 51, 60 to 61, Cys82, Arg86, Tyr146, and Leu172; these read TGLL, YNR, and NL. Residues 308 to 323 form a required for interaction with MAT2A region; that stretch reads LWPFQHDKRWRQTVFH.

It belongs to the dTDP-4-dehydrorhamnose reductase family. MAT2B subfamily. In terms of assembly, heterotrimer; composed of a catalytic mat2a homodimer that binds one regulatory mat2b chain. Heterohexamer; composed of a central, catalytic mat2a homotetramer flanked on either side by a regulatory mat2b chain. NADP binding increases the affinity for mat2a.

It functions in the pathway amino-acid biosynthesis; S-adenosyl-L-methionine biosynthesis; S-adenosyl-L-methionine from L-methionine: step 1/1. Regulatory subunit of S-adenosylmethionine synthetase 2, an enzyme that catalyzes the formation of S-adenosylmethionine from methionine and ATP. Regulates MAT2A catalytic activity by changing its kinetic properties, increasing its affinity for L-methionine. Can bind NADP (in vitro). The protein is Methionine adenosyltransferase 2 subunit beta (mat2b) of Danio rerio (Zebrafish).